The following is a 132-amino-acid chain: Small ribosomal subunit protein uS8 (132 aa).

Belongs to the universal ribosomal protein uS8 family. Part of the 30S ribosomal subunit. Contacts proteins S5 and S12.

One of the primary rRNA binding proteins, it binds directly to 16S rRNA central domain where it helps coordinate assembly of the platform of the 30S subunit. This chain is Small ribosomal subunit protein uS8, found in Beijerinckia indica subsp. indica (strain ATCC 9039 / DSM 1715 / NCIMB 8712).